A 404-amino-acid polypeptide reads, in one-letter code: uncharacterized protein (404 aa).

The first 21 residues, 1–21 (MRKLGLALSIMGLLLVSIVAG), serve as a signal peptide directing secretion. The residue at position 22 (Cys22) is an N-acetylcysteine. Cys22 is lipidated: S-archaeol cysteine.

It belongs to the BMP lipoprotein family.

It localises to the cell membrane. This is an uncharacterized protein from Pyrococcus abyssi (strain GE5 / Orsay).